Reading from the N-terminus, the 144-residue chain is Flagellar assembly factor FliW (144 aa).

The protein belongs to the FliW family. As to quaternary structure, interacts with translational regulator CsrA and flagellin(s).

Its subcellular location is the cytoplasm. Acts as an anti-CsrA protein, binds CsrA and prevents it from repressing translation of its target genes, one of which is flagellin. Binds to flagellin and participates in the assembly of the flagellum. The polypeptide is Flagellar assembly factor FliW (Geobacillus kaustophilus (strain HTA426)).